The sequence spans 262 residues: Glucosamine-6-phosphate deaminase (262 aa).

The active-site Proton acceptor; for enolization step is Asp-63. Asn-129 (for ring-opening step) is an active-site residue. His-131 functions as the Proton acceptor; for ring-opening step in the catalytic mechanism. Glu-136 serves as the catalytic For ring-opening step.

Belongs to the glucosamine/galactosamine-6-phosphate isomerase family. NagB subfamily.

It carries out the reaction alpha-D-glucosamine 6-phosphate + H2O = beta-D-fructose 6-phosphate + NH4(+). The protein operates within amino-sugar metabolism; N-acetylneuraminate degradation; D-fructose 6-phosphate from N-acetylneuraminate: step 5/5. Catalyzes the reversible isomerization-deamination of glucosamine 6-phosphate (GlcN6P) to form fructose 6-phosphate (Fru6P) and ammonium ion. The protein is Glucosamine-6-phosphate deaminase of Bacillus cereus (strain ZK / E33L).